The primary structure comprises 223 residues: Deoxyribose-phosphate aldolase (223 aa).

Residue aspartate 91 is the Proton donor/acceptor of the active site. The Schiff-base intermediate with acetaldehyde role is filled by lysine 153. Catalysis depends on lysine 182, which acts as the Proton donor/acceptor.

The protein belongs to the DeoC/FbaB aldolase family. DeoC type 1 subfamily.

Its subcellular location is the cytoplasm. The enzyme catalyses 2-deoxy-D-ribose 5-phosphate = D-glyceraldehyde 3-phosphate + acetaldehyde. It participates in carbohydrate degradation; 2-deoxy-D-ribose 1-phosphate degradation; D-glyceraldehyde 3-phosphate and acetaldehyde from 2-deoxy-alpha-D-ribose 1-phosphate: step 2/2. In terms of biological role, catalyzes a reversible aldol reaction between acetaldehyde and D-glyceraldehyde 3-phosphate to generate 2-deoxy-D-ribose 5-phosphate. This is Deoxyribose-phosphate aldolase from Streptococcus pyogenes serotype M12 (strain MGAS2096).